Consider the following 247-residue polypeptide: ATP synthase subunit a (247 aa).

Transmembrane regions (helical) follow at residues 24–44, 82–102, 112–132, 141–161, 194–214, and 219–239; these read IAFTNSSAYMLVAVVLTSLLM, FFPFVFTIFMLVTVSNLVGIV, IIVTAALAFLVFFTVLIYGFY, LFVPSGIPIVILPLVVAIEVI, MLGAMGIVGVFGAVLPLALVV, and LELLVAFLQAYVFTILTCIYI.

This sequence belongs to the ATPase A chain family. In terms of assembly, F-type ATPases have 2 components, CF(1) - the catalytic core - and CF(0) - the membrane proton channel. CF(1) has five subunits: alpha(3), beta(3), gamma(1), delta(1), epsilon(1). CF(0) has three main subunits: a(1), b(2) and c(9-12). The alpha and beta chains form an alternating ring which encloses part of the gamma chain. CF(1) is attached to CF(0) by a central stalk formed by the gamma and epsilon chains, while a peripheral stalk is formed by the delta and b chains.

Its subcellular location is the cell inner membrane. In terms of biological role, key component of the proton channel; it plays a direct role in the translocation of protons across the membrane. The chain is ATP synthase subunit a from Nitrobacter hamburgensis (strain DSM 10229 / NCIMB 13809 / X14).